A 268-amino-acid chain; its full sequence is 4-hydroxy-tetrahydrodipicolinate reductase (268 aa).

NAD(+) is bound by residues 9-14 (GVCGRM), Glu-35, 99-101 (GTT), and 123-126 (APNY). His-156 serves as the catalytic Proton donor/acceptor. His-157 lines the (S)-2,3,4,5-tetrahydrodipicolinate pocket. Lys-160 (proton donor) is an active-site residue. (S)-2,3,4,5-tetrahydrodipicolinate is bound at residue 166–167 (GT).

Belongs to the DapB family.

It localises to the cytoplasm. It carries out the reaction (S)-2,3,4,5-tetrahydrodipicolinate + NAD(+) + H2O = (2S,4S)-4-hydroxy-2,3,4,5-tetrahydrodipicolinate + NADH + H(+). It catalyses the reaction (S)-2,3,4,5-tetrahydrodipicolinate + NADP(+) + H2O = (2S,4S)-4-hydroxy-2,3,4,5-tetrahydrodipicolinate + NADPH + H(+). The protein operates within amino-acid biosynthesis; L-lysine biosynthesis via DAP pathway; (S)-tetrahydrodipicolinate from L-aspartate: step 4/4. Catalyzes the conversion of 4-hydroxy-tetrahydrodipicolinate (HTPA) to tetrahydrodipicolinate. This chain is 4-hydroxy-tetrahydrodipicolinate reductase, found in Magnetococcus marinus (strain ATCC BAA-1437 / JCM 17883 / MC-1).